The primary structure comprises 229 residues: Enolase-phosphatase E1 (229 aa).

Positions 207 to 229 are disordered; it reads RDPASHHPQVQRFDDIHPEQIPA. Basic and acidic residues predominate over residues 218–229; sequence RFDDIHPEQIPA.

This sequence belongs to the HAD-like hydrolase superfamily. MasA/MtnC family. In terms of assembly, monomer. The cofactor is Mg(2+).

The enzyme catalyses 5-methylsulfanyl-2,3-dioxopentyl phosphate + H2O = 1,2-dihydroxy-5-(methylsulfanyl)pent-1-en-3-one + phosphate. It functions in the pathway amino-acid biosynthesis; L-methionine biosynthesis via salvage pathway; L-methionine from S-methyl-5-thio-alpha-D-ribose 1-phosphate: step 3/6. The protein operates within amino-acid biosynthesis; L-methionine biosynthesis via salvage pathway; L-methionine from S-methyl-5-thio-alpha-D-ribose 1-phosphate: step 4/6. Its function is as follows. Bifunctional enzyme that catalyzes the enolization of 2,3-diketo-5-methylthiopentyl-1-phosphate (DK-MTP-1-P) into the intermediate 2-hydroxy-3-keto-5-methylthiopentenyl-1-phosphate (HK-MTPenyl-1-P), which is then dephosphorylated to form the acireductone 1,2-dihydroxy-3-keto-5-methylthiopentene (DHK-MTPene). In Klebsiella pneumoniae (strain 342), this protein is Enolase-phosphatase E1.